The sequence spans 280 residues: Vitamin B12-binding protein (280 aa).

The N-terminal stretch at 1–27 (MMPLGLFPLPRAAAVLLISLLTLPAQA) is a signal peptide. Positions 30 to 277 (RVISLSPSTT…QMASIPTPVA (248 aa)) constitute a Fe/B12 periplasmic-binding domain. Tyr57 lines the cyanocob(III)alamin pocket. Cys190 and Cys266 are joined by a disulfide.

The protein belongs to the BtuF family. As to quaternary structure, the complex is composed of two ATP-binding proteins (BtuD), two transmembrane proteins (BtuC) and a solute-binding protein (BtuF).

The protein resides in the periplasm. Functionally, part of the ABC transporter complex BtuCDF involved in vitamin B12 import. Binds vitamin B12 and delivers it to the periplasmic surface of BtuC. The protein is Vitamin B12-binding protein of Yersinia pestis bv. Antiqua (strain Antiqua).